Here is a 342-residue protein sequence, read N- to C-terminus: Nuclear hormone receptor family member nhr-150 (342 aa).

Residues 1–71 (MCQVCGAAEA…AGMTSKKIQS (71 aa)) constitute a DNA-binding region (nuclear receptor). An NR C4-type zinc finger spans residues 2–22 (CQVCGAAEADLHFGGISCRAC). The NR C4-type; degenerate zinc-finger motif lies at 39 to 54 (CTCKTRILDSHPCRSC). An NR LBD domain is found at 94–341 (SARIIPRSSL…GFMEIIRESK (248 aa)).

It belongs to the nuclear hormone receptor family.

The protein resides in the nucleus. Functionally, orphan nuclear receptor. This chain is Nuclear hormone receptor family member nhr-150 (nhr-150), found in Caenorhabditis elegans.